The following is a 550-amino-acid chain: Warthog protein 8 (550 aa).

Residues 1–19 (MNYLLLVSGLLSVWQPVFG) form the signal peptide.

The protein belongs to the hedgehog family. Post-translationally, the C-terminal domain displays an autoproteolysis activity.

It is found in the secreted. The protein resides in the cell surface. The protein localises to the cell membrane. Its subcellular location is the extracellular space. Functionally, intercellular signal essential for a variety of patterning events during development. The sequence is that of Warthog protein 8 (wrt-8) from Caenorhabditis elegans.